Here is a 244-residue protein sequence, read N- to C-terminus: Carboxy-S-adenosyl-L-methionine synthase (244 aa).

S-adenosyl-L-methionine-binding positions include Y40, 65 to 67 (GCS), 90 to 91 (DN), 119 to 120 (DL), N134, and R201.

Belongs to the class I-like SAM-binding methyltransferase superfamily. Cx-SAM synthase family. In terms of assembly, homodimer.

The enzyme catalyses prephenate + S-adenosyl-L-methionine = carboxy-S-adenosyl-L-methionine + 3-phenylpyruvate + H2O. Functionally, catalyzes the conversion of S-adenosyl-L-methionine (SAM) to carboxy-S-adenosyl-L-methionine (Cx-SAM). This is Carboxy-S-adenosyl-L-methionine synthase from Trichlorobacter lovleyi (strain ATCC BAA-1151 / DSM 17278 / SZ) (Geobacter lovleyi).